Consider the following 354-residue polypeptide: Probable L-ascorbate-6-phosphate lactonase UlaG (354 aa).

The protein belongs to the UlaG family. The cofactor is a divalent metal cation.

The protein localises to the cytoplasm. The enzyme catalyses L-ascorbate 6-phosphate + H2O = 3-dehydro-L-gulonate 6-phosphate. The protein operates within cofactor degradation; L-ascorbate degradation; D-xylulose 5-phosphate from L-ascorbate: step 1/4. Probably catalyzes the hydrolysis of L-ascorbate-6-P into 3-keto-L-gulonate-6-P. Is essential for L-ascorbate utilization under anaerobic conditions. In Salmonella agona (strain SL483), this protein is Probable L-ascorbate-6-phosphate lactonase UlaG.